The sequence spans 474 residues: Synaptotagmin-17 (474 aa).

Residues 54–112 (PAQTPPWLVSNRSEDKEGDSDNTTSEPPATPQDTSPDRRRSSSDTSRSTYSLTRRISSL) are disordered. Low complexity predominate over residues 96–112 (SDTSRSTYSLTRRISSL). C2 domains lie at 184–310 (QLGM…HWWK) and 321–455 (ELGE…EQWH).

It belongs to the synaptotagmin family.

The protein localises to the membrane. In terms of biological role, may play a role in dendrite formation by melanocytes. This Xenopus tropicalis (Western clawed frog) protein is Synaptotagmin-17 (syt17).